The following is a 66-amino-acid chain: Antitoxin RelB2 (66 aa).

In terms of biological role, antitoxin component of a type II toxin-antitoxin (TA) system. Neutralizes the effect of cognate toxin RelE2, but no other RelE or ParE toxin. The protein is Antitoxin RelB2 (relB2) of Caulobacter vibrioides (strain ATCC 19089 / CIP 103742 / CB 15) (Caulobacter crescentus).